The sequence spans 1455 residues: Fanconi anemia group A protein (1455 aa).

Residues 18 to 34 (RRRAWAELLAGRVKREK) carry the Nuclear localization signal motif. Ser-1449 carries the post-translational modification Phosphoserine.

As to quaternary structure, belongs to the multisubunit FA complex composed of FANCA, FANCB, FANCC, FANCE, FANCF, FANCG, FANCL/PHF9 and FANCM. The complex is not found in FA patients. In complex with FANCF, FANCG and FANCL, but not with FANCC, nor FANCE, interacts with HES1; this interaction may be essential for the stability and nuclear localization of FA core complex proteins. The complex with FANCC and FANCG may also include EIF2AK2 and HSP70. Interacts with FAAP20/C1orf86; interaction is direct. In terms of processing, phosphorylation is required for the formation of the nuclear complex. Not phosphorylated in cells derived from groups A, B, C, E, F, G, and H.

It localises to the nucleus. The protein localises to the cytoplasm. In terms of biological role, DNA repair protein that may operate in a postreplication repair or a cell cycle checkpoint function. May be involved in interstrand DNA cross-link repair and in the maintenance of normal chromosome stability. The protein is Fanconi anemia group A protein (FANCA) of Homo sapiens (Human).